The following is a 548-amino-acid chain: Glucose-6-phosphate isomerase (548 aa).

Catalysis depends on glutamate 353, which acts as the Proton donor. Catalysis depends on residues histidine 384 and lysine 512.

Belongs to the GPI family.

It is found in the cytoplasm. It carries out the reaction alpha-D-glucose 6-phosphate = beta-D-fructose 6-phosphate. It participates in carbohydrate biosynthesis; gluconeogenesis. Its pathway is carbohydrate degradation; glycolysis; D-glyceraldehyde 3-phosphate and glycerone phosphate from D-glucose: step 2/4. Functionally, catalyzes the reversible isomerization of glucose-6-phosphate to fructose-6-phosphate. This Pseudoalteromonas translucida (strain TAC 125) protein is Glucose-6-phosphate isomerase.